The following is a 338-amino-acid chain: Ribosomal RNA small subunit methyltransferase C (338 aa).

This sequence belongs to the methyltransferase superfamily. RsmC family. As to quaternary structure, monomer.

Its subcellular location is the cytoplasm. It carries out the reaction guanosine(1207) in 16S rRNA + S-adenosyl-L-methionine = N(2)-methylguanosine(1207) in 16S rRNA + S-adenosyl-L-homocysteine + H(+). Its function is as follows. Specifically methylates the guanine in position 1207 of 16S rRNA in the 30S particle. The protein is Ribosomal RNA small subunit methyltransferase C of Buchnera aphidicola subsp. Acyrthosiphon pisum (strain APS) (Acyrthosiphon pisum symbiotic bacterium).